We begin with the raw amino-acid sequence, 369 residues long: Protein RIC-3 (369 aa).

A signal peptide spans 1–28 (MAYSTVQRVALASGLVLALSLLLPKAFL). Residues 29–95 (SRGKRQEPPP…AGGGGSGRGL (67 aa)) lie on the Lumenal side of the membrane. Positions 30 to 67 (RGKRQEPPPTPEGKLGRFPPMMHHHQAPSDGQTPGARF) are disordered. The helical transmembrane segment at 96-116 (MGQIIPIYGFGIFLYILYILF) threads the bilayer. Over 117–369 (KLSKGKTTAE…LRKRNPQGLE (253 aa)) the chain is Cytoplasmic. Residues 140–169 (RKITSFELAQLQEKLKETEAAMEKLINRVG) are a coiled coil. Lys-202 is subject to N6-acetyllysine; alternate. Lys-202 is covalently cross-linked (Glycyl lysine isopeptide (Lys-Gly) (interchain with G-Cter in ubiquitin); alternate). Disordered regions lie at residues 272-295 (ESDHLGWESLPTDPRAQEDNSVTS) and 316-369 (LAEN…QGLE). A compositionally biased stretch (basic and acidic residues) spans 332 to 346 (ETTKEEWSQDFKDEG). Basic residues predominate over residues 360–369 (LRKRNPQGLE).

This sequence belongs to the ric-3 family. Monomer and homodimer. Interacts with CHRNA7, CHRNA3, CHRNA4, CHRNB2, CHRNB4 and HTR3A. Broadly expressed, with high levels in muscle, brain, heart, pancreas and testis. In the central nervous system, highest levels are detected in the cerebellum and pituitary gland. Over-expressed in brains from patients with bipolar disease or schizophrenia. Isoform 5 is predominantly expressed in the brain.

It is found in the endoplasmic reticulum membrane. It localises to the golgi apparatus membrane. Molecular chaperone which facilitates proper subunit assembly and surface trafficking of alpha-7 (CHRNA7) and alpha-8 (CHRNA8) nicotinic acetylcholine receptors. May also promote functional expression of homomeric serotoninergic 5-HT3 receptors, and of heteromeric acetylcholine receptors alpha-3/beta-2, alpha-3/beta-4, alpha-4/beta-2 and alpha-4/beta-4. The protein is Protein RIC-3 (RIC3) of Homo sapiens (Human).